The chain runs to 899 residues: Protein suppressor of hairy wing (899 aa).

Disordered stretches follow at residues 1-33 (MSAQ…RTGT), 45-127 (AAVA…KKMD), and 171-206 (AKEN…AKRR). Over residues 21–31 (SDGDKPKEKRT) the composition is skewed to basic and acidic residues. Over residues 45–55 (AAVASKGASVS) the composition is skewed to low complexity. Composition is skewed to polar residues over residues 67–83 (KILN…STKG) and 102–111 (RSSAPASSAV). The segment covering 183–198 (VDEDDDDDDDDEDEGV) has biased composition (acidic residues). Residues 218 to 240 (HVCGKCYKTFRRVKSLKKHLEFC) form a C2H2-type 1; atypical zinc finger. Residues 288–311 (INCPDCPKSFKTQTSYERHIFITH) form a C2H2-type 2 zinc finger. Residues 318-340 (YPCSICNAKLRSGALLKLHEQQH) form a C2H2-type 3; atypical zinc finger. 9 consecutive C2H2-type zinc fingers follow at residues 347 to 365 (FACK…LKCH), 379 to 401 (MSCK…LKQH), 412 to 434 (YMCH…IRTH), 440 to 462 (FDCD…RRYH), 468 to 490 (YTCT…MKRH), 496 to 518 (HKCN…SKTH), 522 to 544 (YACS…VKDH), 552 to 576 (FACT…AGDH), and 594 to 617 (TDCA…RSVH). Disordered regions lie at residues 646–665 (EQKE…GSLI), 702–734 (PLEG…VVKK), and 865–899 (GDED…ESEA). Residues 874–899 (ETDKGKDREADNTDTDTREDAVESEA) show a composition bias toward basic and acidic residues.

The protein resides in the nucleus. In terms of biological role, component of the gypsy chromatin insulator complex which is required for the function of the gypsy chromatin insulator and other endogenous chromatin insulators. Chromatin insulators are regulatory elements which establish independent domains of transcriptional activity within eukaryotic genomes. Insulators have two defining properties; they can block the communication between an enhancer and a promoter when placed between them and can also buffer transgenes from position effect variegation (PEV). Insulators are proposed to structure the chromatin fiber into independent domains of differing transcriptional potential by promoting the formation of distinct chromatin loops. This chromatin looping may involve the formation of insulator bodies, where homotypic interactions between individual subunits of the insulator complex could promote the clustering of widely spaced insulators at the nuclear periphery. Within the gypsy insulator complex, this protein binds specifically to a region of the gypsy element located 3' of the 5' long terminal repeat (LTR), and may also mediate interaction with other endogenous insulators at sites distinct from those recognized by Cp190. Cooperates with pita and cliff to recruit Cp190 and regulate insulator function at the front-ultraabdominal (Fub) boundary. The polypeptide is Protein suppressor of hairy wing (su(Hw)) (Drosophila virilis (Fruit fly)).